Here is a 1690-residue protein sequence, read N- to C-terminus: Lysine-specific demethylase 5A (1690 aa).

One can recognise a JmjN domain in the interval 19-60; that stretch reads CPVFEPSWEEFTDPLSFIGRIRPLAEKTGICKIRPPKDWQPP. The ARID domain occupies 84 to 174; it reads TRVRLDFLDQ…ILYPYELFQS (91 aa). Residue lysine 191 forms a Glycyl lysine isopeptide (Lys-Gly) (interchain with G-Cter in SUMO2) linkage. A Phosphoserine modification is found at serine 204. The PHD-type 1 zinc finger occupies 293 to 343; it reads LYVCMFCGRGNNEDKLLLCDGCDDSYHTFCLIPPLPDVPKGDWRCPKCVAE. A 2-oxoglutarate-binding site is contributed by tyrosine 409. The short motif at 419 to 423 is the GSGFP motif element; that stretch reads GSGFP. In terms of domain architecture, JmjC spans 437–603; it reads EYALSGWNLN…IGRQCVNHYR (167 aa). Fe cation contacts are provided by histidine 483 and glutamate 485. 2-oxoglutarate-binding residues include serine 491, asparagine 493, and lysine 501. Histidine 571 contacts Fe cation. Residues 676–728 form a C5HC2 zinc finger; the sequence is CSACRTTCFLSALTCSCNPERLVCLYHPTDLCPCPMQKKCLRYRYPLEDLPSL. Lysine 1007 participates in a covalent cross-link: Glycyl lysine isopeptide (Lys-Gly) (interchain with G-Cter in SUMO2). Serine 1111 is subject to Phosphoserine. Residues 1161–1218 form a PHD-type 2 zinc finger; it reads VKFCICRKTASGFMLQCELCKDWFHNSCVPLPKSSSQKKGSSWQAKEVKFLCPLCMRS. 2 disordered regions span residues 1327-1348 and 1407-1433; these read SVSSSPRQTMDYDDEETDSDED and KSCSQGSSTPRKQPRKSPLVPRSLEPP. 2 positions are modified to phosphoserine: serine 1330 and serine 1331. Positions 1337-1348 are enriched in acidic residues; it reads DYDDEETDSDED. Threonine 1343 bears the Phosphothreonine mark. Serine 1345 is modified (phosphoserine). Phosphoserine occurs at positions 1438 and 1488. Composition is skewed to basic and acidic residues over residues 1490–1503 and 1520–1530; these read EEKPLKVKGKDSSE and GKQKSKELKKM. Disordered regions lie at residues 1490-1509 and 1516-1543; these read EEKPLKVKGKDSSEKKRKRK and LFGEGKQKSKELKKMDKPRKKKLKLGAD. Residue tyrosine 1595 is modified to Phosphotyrosine. Serine 1598 and serine 1603 each carry phosphoserine. The PHD-type 3 zinc finger occupies 1607-1661; that stretch reads NAVCAAQNCQRPCKDKVDWVQCDGGCDEWFHQVCVGVSPEMAENEDYICINCAKK. The interval 1623–1690 is interaction with LMO2; that stretch reads VDWVQCDGGC…LPMEDLKETS (68 aa). Serine 1666 carries the post-translational modification Phosphoserine.

It belongs to the JARID1 histone demethylase family. Interacts with SUZ12; the interaction is direct. Interacts with the viral protein-binding domain of RB1. Interacts with ESR1, MYC, MYCN and LMO2. Interacts with HDAC1; this interaction impairs histone deacetylation by HDAC1. Interacts with BMAL1 and CLOCK. Interacts (via PHD-type 1 zinc finger) with histone H3 unmodified at 'Lys-4' and (via PHD-type 3 zinc finger) with histone H3 di- and trimethylated at 'Lys-4'. Requires Fe(2+) as cofactor.

The protein resides in the nucleus. The protein localises to the nucleolus. It catalyses the reaction N(6),N(6),N(6)-trimethyl-L-lysyl(4)-[histone H3] + 3 2-oxoglutarate + 3 O2 = L-lysyl(4)-[histone H3] + 3 formaldehyde + 3 succinate + 3 CO2. With respect to regulation, the inhibitors KDOAM-25, CPI-455 and others inhibits its demethylase activity, resulting to cell growth arrest in cancer cells. Its function is as follows. Histone demethylase that specifically demethylates 'Lys-4' of histone H3, thereby playing a central role in histone code. Does not demethylate histone H3 'Lys-9', H3 'Lys-27', H3 'Lys-36', H3 'Lys-79' or H4 'Lys-20'. Demethylates trimethylated and dimethylated but not monomethylated H3 'Lys-4'. Regulates specific gene transcription through DNA-binding on 5'-CCGCCC-3' motif. May stimulate transcription mediated by nuclear receptors. Involved in transcriptional regulation of Hox proteins during cell differentiation. May participate in transcriptional repression of cytokines such as CXCL12. Plays a role in the regulation of the circadian rhythm and in maintaining the normal periodicity of the circadian clock. In a histone demethylase-independent manner, acts as a coactivator of the CLOCK-BMAL1-mediated transcriptional activation of PER1/2 and other clock-controlled genes and increases histone acetylation at PER1/2 promoters by inhibiting the activity of HDAC1. Seems to act as a transcriptional corepressor for some genes such as MT1F and to favor the proliferation of cancer cells. The polypeptide is Lysine-specific demethylase 5A (Homo sapiens (Human)).